We begin with the raw amino-acid sequence, 442 residues long: Proline--tRNA ligase (442 aa).

It belongs to the class-II aminoacyl-tRNA synthetase family. ProS type 2 subfamily. As to quaternary structure, homodimer.

It is found in the cytoplasm. It carries out the reaction tRNA(Pro) + L-proline + ATP = L-prolyl-tRNA(Pro) + AMP + diphosphate. Catalyzes the attachment of proline to tRNA(Pro) in a two-step reaction: proline is first activated by ATP to form Pro-AMP and then transferred to the acceptor end of tRNA(Pro). This Brucella abortus (strain S19) protein is Proline--tRNA ligase.